The following is a 220-amino-acid chain: Small ribosomal subunit protein uS2 (220 aa).

It belongs to the universal ribosomal protein uS2 family.

The polypeptide is Small ribosomal subunit protein uS2 (Methanococcus maripaludis (strain C5 / ATCC BAA-1333)).